Reading from the N-terminus, the 427-residue chain is Proline--tRNA ligase (427 aa).

Belongs to the class-II aminoacyl-tRNA synthetase family. ProS type 2 subfamily. Homodimer.

It is found in the cytoplasm. The catalysed reaction is tRNA(Pro) + L-proline + ATP = L-prolyl-tRNA(Pro) + AMP + diphosphate. Catalyzes the attachment of proline to tRNA(Pro) in a two-step reaction: proline is first activated by ATP to form Pro-AMP and then transferred to the acceptor end of tRNA(Pro). This chain is Proline--tRNA ligase, found in Rickettsia akari (strain Hartford).